Reading from the N-terminus, the 292-residue chain is Chronophin (292 aa).

Asp25 acts as the Nucleophile in catalysis. Asp25 and Asp27 together coordinate Mg(2+). Residue Asp27 is the Proton donor of the active site. Substrate-binding positions include 58–60 (SNN), His178, and Lys209. Residue Asp234 coordinates Mg(2+).

Belongs to the HAD-like hydrolase superfamily. As to quaternary structure, homodimer. Mg(2+) serves as cofactor. In terms of tissue distribution, ubiquitous. highly expressed in brain (at protein level).

It localises to the cytoplasm. The protein localises to the cytosol. Its subcellular location is the cytoskeleton. It is found in the cell projection. The protein resides in the ruffle membrane. It localises to the lamellipodium membrane. The protein localises to the cell membrane. The catalysed reaction is pyridoxal 5'-phosphate + H2O = pyridoxal + phosphate. It carries out the reaction pyridoxine 5'-phosphate + H2O = pyridoxine + phosphate. The enzyme catalyses pyridoxamine + phosphate = pyridoxamine 5'-phosphate + H2O. It catalyses the reaction O-phospho-L-seryl-[protein] + H2O = L-seryl-[protein] + phosphate. Inhibited by beryllium trifluoride. In terms of biological role, functions as a pyridoxal phosphate (PLP) phosphatase, which also catalyzes the dephosphorylation of pyridoxine 5'-phosphate (PNP) and pyridoxamine 5'-phosphate (PMP), with order of substrate preference PLP &gt; PNP &gt; PMP and therefore plays a role in vitamin B6 metabolism. Also functions as a protein serine phosphatase that specifically dephosphorylates 'Ser-3' in proteins of the actin-depolymerizing factor (ADF)/cofilin family like CFL1 and DSTN. Thereby, regulates cofilin-dependent actin cytoskeleton reorganization, being required for normal progress through mitosis and normal cytokinesis. Does not dephosphorylate phosphothreonines in LIMK1. Does not dephosphorylate peptides containing phosphotyrosine. The polypeptide is Chronophin (Mus musculus (Mouse)).